The chain runs to 236 residues: V-set and transmembrane domain-containing protein 2A (236 aa).

A signal peptide spans 1-24; that stretch reads MMGIFLVYVGFVFFSVLYVQQGLS. One can recognise an Ig-like V-type domain in the interval 27 to 143; it reads AKFTEFPRNV…YGELQEHKAQ (117 aa). Residue asparagine 35 is glycosylated (N-linked (GlcNAc...) asparagine). Cysteines 48 and 127 form a disulfide. The N-linked (GlcNAc...) asparagine glycan is linked to asparagine 175. A compositionally biased stretch (polar residues) spans 184-199; the sequence is IHGSANQRTHSTSSPQ. The interval 184–206 is disordered; sequence IHGSANQRTHSTSSPQVVAKIPK.

As to quaternary structure, homodimer. Post-translationally, N-glycosylated. N-linked glycosylation is critical for secretion but not for preadipocyte cell differentiation activity.

The protein resides in the secreted. Functionally, plays a role in the regulation of the early stage of white and brown preadipocyte cell differentiation. Promotes adipogenic commitment of preadipocytes by increasing gene expression of the transcription factor PPARG in a BMP4-dependent signaling pathway. This Homo sapiens (Human) protein is V-set and transmembrane domain-containing protein 2A.